The chain runs to 346 residues: Peroxidase 19 (346 aa).

The first 31 residues, 1–31 (MHVISLSLSSIFFFLFLTSTILISPVQPTTS), serve as a signal peptide directing secretion. Intrachain disulfides connect Cys51–Cys134, Cys84–Cys89, Cys140–Cys342, and Cys219–Cys251. His82 (proton acceptor) is an active-site residue. Ca(2+)-binding residues include Asp83, Val86, Gly88, Asp90, and Ser92. Pro182 lines the substrate pocket. Asn185 carries N-linked (GlcNAc...) asparagine glycosylation. A heme b-binding site is contributed by His212. Residue Thr213 coordinates Ca(2+). Ca(2+)-binding residues include Asp265, Thr268, and Asp273.

Belongs to the peroxidase family. Classical plant (class III) peroxidase subfamily. The cofactor is heme b. Requires Ca(2+) as cofactor.

It localises to the secreted. The enzyme catalyses 2 a phenolic donor + H2O2 = 2 a phenolic radical donor + 2 H2O. Its function is as follows. Removal of H(2)O(2), oxidation of toxic reductants, biosynthesis and degradation of lignin, suberization, auxin catabolism, response to environmental stresses such as wounding, pathogen attack and oxidative stress. These functions might be dependent on each isozyme/isoform in each plant tissue. This is Peroxidase 19 (PER19) from Arabidopsis thaliana (Mouse-ear cress).